Consider the following 380-residue polypeptide: Cytochrome b (380 aa).

A run of 4 helical transmembrane segments spans residues 34–54 (FGSLLAVCLATQIITGLLLAA), 78–99 (WLIRNLHANGASFFFICIYLHI), 114–134 (WNTGVILLLTLMATAFVGYVL), and 179–199 (FFALHFLLPFIIAGITIIHLA). Heme b-binding residues include His-84 and His-98. Heme b-binding residues include His-183 and His-197. Position 202 (His-202) interacts with a ubiquinone. 4 helical membrane-spanning segments follow: residues 227–247 (LKDILGLALMITPLLTLALFS), 289–309 (LGGVLALAASVFILFLIPLLH), 321–341 (LSQLLFWLLAANLFILTWIGS), and 348–368 (FIIIGQLASLSYFTTLLILFP).

It belongs to the cytochrome b family. The cytochrome bc1 complex contains 11 subunits: 3 respiratory subunits (MT-CYB, CYC1 and UQCRFS1), 2 core proteins (UQCRC1 and UQCRC2) and 6 low-molecular weight proteins (UQCRH/QCR6, UQCRB/QCR7, UQCRQ/QCR8, UQCR10/QCR9, UQCR11/QCR10 and a cleavage product of UQCRFS1). This cytochrome bc1 complex then forms a dimer. Requires heme b as cofactor.

It localises to the mitochondrion inner membrane. Its function is as follows. Component of the ubiquinol-cytochrome c reductase complex (complex III or cytochrome b-c1 complex) that is part of the mitochondrial respiratory chain. The b-c1 complex mediates electron transfer from ubiquinol to cytochrome c. Contributes to the generation of a proton gradient across the mitochondrial membrane that is then used for ATP synthesis. The polypeptide is Cytochrome b (MT-CYB) (Cyrtonyx montezumae (Montezuma quail)).